The chain runs to 89 residues: Small ribosomal subunit protein uS15 (89 aa).

It belongs to the universal ribosomal protein uS15 family. As to quaternary structure, part of the 30S ribosomal subunit. Forms a bridge to the 50S subunit in the 70S ribosome, contacting the 23S rRNA.

In terms of biological role, one of the primary rRNA binding proteins, it binds directly to 16S rRNA where it helps nucleate assembly of the platform of the 30S subunit by binding and bridging several RNA helices of the 16S rRNA. Forms an intersubunit bridge (bridge B4) with the 23S rRNA of the 50S subunit in the ribosome. In Pseudomonas putida (strain GB-1), this protein is Small ribosomal subunit protein uS15.